The sequence spans 425 residues: Metacaspase-1 (425 aa).

Residues 1–110 (MSYNSNPYNG…PQLPNTQTQS (110 aa)) are disordered. Residues 13–28 (YPPYNTYTRPNYSPNN) show a composition bias toward low complexity. Polar residues-rich tracts occupy residues 29-38 (GSQSNNTVHQ) and 88-110 (TGAN…QTQS). Active-site residues include His-214 and Cys-270.

This sequence belongs to the peptidase C14B family.

The protein localises to the cytoplasm. It is found in the nucleus. Involved in cell death (apoptosis). The polypeptide is Metacaspase-1 (pca1) (Schizosaccharomyces pombe (strain 972 / ATCC 24843) (Fission yeast)).